The sequence spans 331 residues: Probable allantoicase (331 aa).

This sequence belongs to the allantoicase family.

It catalyses the reaction allantoate + H2O = (S)-ureidoglycolate + urea. It functions in the pathway nitrogen metabolism; (S)-allantoin degradation; (S)-ureidoglycolate from allantoate (aminidohydrolase route): step 1/1. The polypeptide is Probable allantoicase (Pseudomonas fluorescens (strain SBW25)).